Consider the following 426-residue polypeptide: Inhibin beta A chain (426 aa).

An N-terminal signal peptide occupies residues 1 to 20; sequence MPLLWLRGFLLASCWIIVRS. Residues 21 to 310 constitute a propeptide that is removed on maturation; it reads SPTPGSEGHS…EDHPHRRRRR (290 aa). Residue Asn-165 is glycosylated (N-linked (GlcNAc...) asparagine). A disordered region spans residues 259–288; it reads KKKKKEEEGEGKKKGGGEGGAGADEEKEQS. Over residues 263–274 the composition is skewed to basic and acidic residues; the sequence is KEEEGEGKKKGG. 4 disulfide bridges follow: Cys-314-Cys-322, Cys-321-Cys-391, Cys-350-Cys-423, and Cys-354-Cys-425.

This sequence belongs to the TGF-beta family. As to quaternary structure, dimeric, linked by one or more disulfide bonds. Inhibin A is a dimer of alpha/INHA and beta-A/INHBA. Activin A is a homodimer of beta-A/INHBA. Activin AB is a dimer of beta-A/INHBA and beta-B/INHBB. Interacts with FST and FSTL3; these interactions prevent activin A interaction to its type II receptor. Activin A interacts with ACVR2A. Activin A interacts with BMPR2. Inhibin A interacts with ACVR1; this interaction creates a non-signaling complex (NSC) that inhibits ACVR1-mediated BMP signaling. Inhibin A interacts with ACVR2A.

It is found in the secreted. In terms of biological role, inhibins/activins are involved in regulating a number of diverse functions such as hypothalamic and pituitary hormone secretion, gonadal hormone secretion, germ cell development and maturation, erythroid differentiation, insulin secretion, nerve cell survival, embryonic axial development or bone growth, depending on their subunit composition. Activin A is a homodimer of INHBA that plays a role in several essential biological processes including embryonic development, stem cell maintenance and differentiation, haematopoiesis, cell proliferation and tissue fibrosis. Signals through type I (such as ACVR1B or ACVR1C) and type II receptors (such as ACVR2A, ACVR2B or BMPR2) which, upon ligand binding, phosphorylate SMAD2 and SMAD3 intracellular signaling mediators that form a complex with SMAD4, translocate to the nucleus and modulate gene expression. Can also activate alternative non-canonical intracellular signaling pathways including the p38 MAPK, extracellular signal-regulated kinases 1/2 (ERK1/2) and c-Jun N-terminal kinases (JNKs) to modulate cell migration and differentiation. Alternatively, promotes osteoblastic differentiation via ACVRL1-SMAD1/5/9 pathway. In addition, can engage the type I receptor ACVR1 to form an ACVR1-activin A-type II receptor non-signaling complex (NSC) that renders receptors unavailable for engagement with BMPs, hence resulting in an apparent inhibition of ACVR1-mediated BMP signaling. Functionally, inhibin A is a dimer of alpha/INHA and beta-A/INHBA that functions as a feedback regulator in the hypothalamic-pituitary-gonadal (HPG) axis. Inhibits the secretion of FSH from the anterior pituitary gland by acting on pituitary gonadotrope cells. Antagonizes activin A by binding to the proteoglycan, betaglycan, and forming a stable complex with and, thereby, sequestering type II activin receptors while excluding type I receptor. The chain is Inhibin beta A chain (INHBA) from Homo sapiens (Human).